The sequence spans 495 residues: Galactose-1-phosphate uridylyltransferase (495 aa).

This sequence belongs to the galactose-1-phosphate uridylyltransferase type 2 family.

It is found in the cytoplasm. It carries out the reaction alpha-D-galactose 1-phosphate + UDP-alpha-D-glucose = alpha-D-glucose 1-phosphate + UDP-alpha-D-galactose. The protein operates within carbohydrate metabolism; galactose metabolism. This Ligilactobacillus salivarius (strain UCC118) (Lactobacillus salivarius) protein is Galactose-1-phosphate uridylyltransferase.